The primary structure comprises 210 residues: Probable transcriptional regulator ycf29 (210 aa).

The Response regulatory domain maps to asparagine 3–leucine 119. Aspartate 52 is modified (4-aspartylphosphate). Residues serine 142–asparagine 207 form the HTH luxR-type domain.

The protein localises to the plastid. The protein resides in the cyanelle. This is Probable transcriptional regulator ycf29 (ycf29) from Cyanophora paradoxa.